The following is an 873-amino-acid chain: Putative receptor-like protein kinase At5g39000 (873 aa).

Residues 1-21 (MIRHALLIFSILVSTPIVGEG) form the signal peptide. Over 22-445 (ATSTYEPTDV…KNKSHILPIT (424 aa)) the chain is Extracellular. N-linked (GlcNAc...) asparagine glycosylation is found at N49, N64, N138, N168, N216, N266, N300, N340, and N437. Residues 446–466 (LAVVGSLVVLAMFVVGVLVIM) form a helical membrane-spanning segment. At 467-873 (KKKKKSKPST…FSEINEPKAR (407 aa)) the chain is on the cytoplasmic side. A disordered region spans residues 472–494 (SKPSTNSSWCPLPHGTDSTNTKP). The 286-residue stretch at 518–803 (FEDKLIIGVG…EFALQLHETA (286 aa)) folds into the Protein kinase domain. Residues 524 to 532 (IGVGGFGSV) and K547 contribute to the ATP site. The active-site Proton acceptor is D646. The interval 813-843 (LDLMPSGEVGTTTDGEDDLFSRTTGHVGKST) is disordered. Positions 833–843 (SRTTGHVGKST) are enriched in polar residues.

Belongs to the protein kinase superfamily. Ser/Thr protein kinase family.

Its subcellular location is the membrane. The chain is Putative receptor-like protein kinase At5g39000 from Arabidopsis thaliana (Mouse-ear cress).